Consider the following 222-residue polypeptide: Ras-related protein Rab-21 (222 aa).

Ala-2 bears the N-acetylalanine mark. Gly-25, Gly-28, Lys-29, Thr-30, Ser-31, Asn-42, Asp-43, His-45, Thr-47, and Thr-48 together coordinate GTP. Thr-30 is a Mg(2+) binding site. The Switch 1 signature appears at 40-53 (KFNDKHITTLQASF). Mg(2+)-binding residues include Thr-48 and Asp-71. A Switch 2 motif is present at residues 73 to 91 (AGQERFHALGPIYYRDSNG). Residues Gly-74, Asn-129, Lys-130, Asp-132, Ala-160, and Lys-161 each coordinate GTP. S-geranylgeranyl cysteine attachment occurs at residues Cys-218 and Cys-219. Cys-219 is subject to Cysteine methyl ester. Positions 220–222 (SSG) are cleaved as a propeptide — removed in mature form.

The protein belongs to the small GTPase superfamily. Rab family. In terms of assembly, interacts with the cytoplasmic tail of integrins ITGA1, ITGA2, ITGA5, ITGA6, ITGA11 and ITGB1; this interaction is dependent upon its GDP/GTP cycle. Interacts with RABGEF1 (via VPS9 domain). Interacts with ANKRD27. Interacts (in GTP-bound form) with VAMP8 in response to starvation; the interaction probably regulates VAMP8 endolysosomal trafficking. Interacts (active GTP-bound form) with TMED10; the interaction is indirect and regulates TMED10 abundance and localization at the Golgi. Mg(2+) is required as a cofactor.

It is found in the endoplasmic reticulum membrane. Its subcellular location is the golgi apparatus. The protein localises to the trans-Golgi network. The protein resides in the golgi apparatus membrane. It localises to the early endosome membrane. It is found in the cytoplasmic vesicle membrane. Its subcellular location is the cleavage furrow. The protein localises to the cell projection. The protein resides in the neuron projection. It catalyses the reaction GTP + H2O = GDP + phosphate + H(+). Regulated by guanine nucleotide exchange factors (GEFs) including ANKRD27 and RABGEF1, which promote the exchange of bound GDP for free GTP. Regulated by GTPase activating proteins (GAPs) which increase the GTP hydrolysis activity. Inhibited by GDP dissociation inhibitors (GDIs). Functionally, the small GTPases Rab are key regulators of intracellular membrane trafficking, from the formation of transport vesicles to their fusion with membranes. Rabs cycle between an inactive GDP-bound form and an active GTP-bound form that is able to recruit to membranes different sets of downstream effectors directly responsible for vesicle formation, movement, tethering and fusion. RAB21 is involved in membrane trafficking control. Regulates integrin internalization and recycling, but does not influence the traffic of endosomally translocated receptors in general. As a result, may regulate cell adhesion and migration. During the mitosis of adherent cells, controls the endosomal trafficking of integrins which is required for the successful completion of cytokinesis. Involved in neurite growth. Following SBF2/MTMT13-mediated activation in response to starvation-induced autophagy, binds to and regulates SNARE protein VAMP8 endolysosomal transport required for SNARE-mediated autophagosome-lysosome fusion. Modulates protein levels of the cargo receptors TMED2 and TMED10, and required for appropriate Golgi localization of TMED10. The polypeptide is Ras-related protein Rab-21 (RAB21) (Bos taurus (Bovine)).